The chain runs to 689 residues: Glycine--tRNA ligase beta subunit (689 aa).

Belongs to the class-II aminoacyl-tRNA synthetase family. Tetramer of two alpha and two beta subunits.

The protein localises to the cytoplasm. It catalyses the reaction tRNA(Gly) + glycine + ATP = glycyl-tRNA(Gly) + AMP + diphosphate. The polypeptide is Glycine--tRNA ligase beta subunit (Erwinia tasmaniensis (strain DSM 17950 / CFBP 7177 / CIP 109463 / NCPPB 4357 / Et1/99)).